Here is an 851-residue protein sequence, read N- to C-terminus: Protein NUD1 (851 aa).

Disordered regions lie at residues 1-31 (MDMDTQEAELSSQLENLTINSPRKLRSNAHS) and 216-352 (LVGS…KAPS). Over residues 8-21 (AELSSQLENLTINS) the composition is skewed to polar residues. Low complexity-rich tracts occupy residues 223 to 246 (NSNNKNNNNNNNNNNNNSININNK) and 260 to 278 (SNSFEFSSSSSMSSSQTQS). A compositionally biased stretch (polar residues) spans 291–304 (NTISPGQLGYQFNH). Residues 320-333 (SSSHSLDNTSSNQS) show a composition bias toward low complexity. K357 participates in a covalent cross-link: Glycyl lysine isopeptide (Lys-Gly) (interchain with G-Cter in ubiquitin). Phosphothreonine is present on residues T388 and T392. Residues S417 and S419 each carry the phosphoserine modification. LRR repeat units follow at residues 544-566 (DLECLDLSYNLLNTSLKFLSLCH), 567-588 (HLQEVNLSYNSIQSLEGIGSSR), 589-609 (MKKLNLSNNEINGIIDFEQLI), 621-642 (TVEVLDLSNNNIIGVRNINCLP), and 643-664 (RLKVLNLNGNPLVSIVESSKME).

As to quaternary structure, interacts directly with MPC54, CNM67, SPO21/MPC70, ADY3 and ADY4. Probable component of a spindle pole boby (SPB) complex composed of ADY3, SSP1, DON1, MPC54, SPO21/MPC70, NUD1 and CNM67. Post-translationally, phosphorylated from S/G2 phase until the end of mitosis.

The protein resides in the cytoplasm. It is found in the cytoskeleton. The protein localises to the microtubule organizing center. It localises to the spindle pole body. Its subcellular location is the nucleus envelope. Its function is as follows. Involved in astral microtubule organization by binding SCP72 to the outer plaque in a cell-cycle dependent manner. Required for the mitotic exit by facilitating the binding of TEMP1 to CDC15. Also involved in the pathway that organizes the shaping and sizing of the prospore membrane (PSM) during sporulation. This is Protein NUD1 (NUD1) from Saccharomyces cerevisiae (strain ATCC 204508 / S288c) (Baker's yeast).